Here is a 138-residue protein sequence, read N- to C-terminus: Putative thioredoxin-like protein 453L (138 aa).

The 136-residue stretch at 3 to 138 (QQKYFEKPVY…FNNIVNYVMG (136 aa)) folds into the Thioredoxin domain. Catalysis depends on nucleophile residues Cys-44 and Cys-47. Residues Cys-44 and Cys-47 are joined by a disulfide bond.

It belongs to the thioredoxin family.

In terms of biological role, participates in various redox reactions through the reversible oxidation of its active center dithiol to a disulfide and catalyzes dithiol-disulfide exchange reactions. This chain is Putative thioredoxin-like protein 453L, found in Acheta domesticus (House cricket).